We begin with the raw amino-acid sequence, 205 residues long: Protein phosphatase inhibitor 2 (205 aa).

Disordered stretches follow at residues M1–K46 and G64–S205. Residue A2 is modified to N-acetylalanine. Required for binding PPP1CC regions lie at residues K12–N17 and K43–T55. Positions N17–V26 are enriched in polar residues. The span at S35 to K46 shows a compositional bias: basic and acidic residues. The residue at position 44 (S44) is a Phosphoserine; by ATM. T73 is subject to Phosphothreonine; by GSK3. Residues G80 to T91 show a composition bias toward acidic residues. Position 87 is a phosphoserine (S87). Residues T89, T92, and T96 each carry the phosphothreonine modification. Residues S110–E120 are compositionally biased toward basic and acidic residues. Phosphoserine is present on residues S121, S122, S127, and S130. Over residues S121–S130 the composition is skewed to acidic residues. A compositionally biased stretch (basic and acidic residues) spans P131–K143. The tract at residues H147–E150 is required for binding PPP1CC catalytic center, displacing metal ions and inhibition of PPP1CC catalytic activity. The segment covering D167–D179 has biased composition (acidic residues). Polar residues predominate over residues S182 to S205.

It belongs to the protein phosphatase inhibitor 2 family. Heterodimer with PP1. In terms of processing, phosphorylation on Ser-44 by ATM activates PP1 by dissociating the PP1-PPP1R2 complex. Phosphorylation on Thr-73 by GSK3 activates PP1 by dissociating the PP1-PPP1R2 complex.

Functionally, inhibitor of protein-phosphatase 1. The sequence is that of Protein phosphatase inhibitor 2 (PPP1R2) from Oryctolagus cuniculus (Rabbit).